Reading from the N-terminus, the 306-residue chain is CRISPR-associated endonuclease Cas1 (306 aa).

Mn(2+) is bound by residues E143, H210, and D223.

The protein belongs to the CRISPR-associated endonuclease Cas1 family. As to quaternary structure, homodimer, forms a heterotetramer with a Cas2 homodimer. Mg(2+) serves as cofactor. Mn(2+) is required as a cofactor.

In terms of biological role, CRISPR (clustered regularly interspaced short palindromic repeat), is an adaptive immune system that provides protection against mobile genetic elements (viruses, transposable elements and conjugative plasmids). CRISPR clusters contain spacers, sequences complementary to antecedent mobile elements, and target invading nucleic acids. CRISPR clusters are transcribed and processed into CRISPR RNA (crRNA). Acts as a dsDNA endonuclease. Involved in the integration of spacer DNA into the CRISPR cassette. The chain is CRISPR-associated endonuclease Cas1 from Geobacter sulfurreducens (strain ATCC 51573 / DSM 12127 / PCA).